The primary structure comprises 194 residues: Casparian strip membrane protein 2 (194 aa).

Residues 1–32 (MSTTIDVPESSNVAKGKAVLVAPPRPGGWKKG) are Cytoplasmic-facing. A helical transmembrane segment spans residues 33 to 53 (VAIMDFILRLGAIAAALGAAA). Topologically, residues 54–82 (TMGTSDQTLPFFTQFLQFEASYDSFTSFQ) are extracellular. The helical transmembrane segment at 83-103 (FFVITMALVGGYLVLSLPFSF) threads the bilayer. Over 104–115 (VAIIRPHAAGPR) the chain is Cytoplasmic. Residues 116–136 (LFLIILDTVFLTLTTASGASA) form a helical membrane-spanning segment. The Extracellular segment spans residues 137-168 (AAIVYLAHNGNQDSNWLAICNQFGDFCAQTSS). A helical membrane pass occupies residues 169 to 189 (AVVSSFVAVVVLVLLVVLSAL). The Cytoplasmic portion of the chain corresponds to 190 to 194 (ALGKR).

It belongs to the Casparian strip membrane proteins (CASP) family. As to quaternary structure, homodimer and heterodimers.

Its subcellular location is the cell membrane. Functionally, regulates membrane-cell wall junctions and localized cell wall deposition. Required for establishment of the Casparian strip membrane domain (CSD) and the subsequent formation of Casparian strips, a cell wall modification of the root endodermis that determines an apoplastic barrier between the intraorganismal apoplasm and the extraorganismal apoplasm and prevents lateral diffusion. This Glycine max (Soybean) protein is Casparian strip membrane protein 2.